Consider the following 166-residue polypeptide: MPFQIPDDLNRDLMPLAWMIGHWEGEGHGNTPDDGEFSFGCQVDFTDNGGDYLHYICQTFTMNPDGTPAAPLRMETGFWRPNVDTRKVDVLMAAPEGWAEVWTGNIDGAKIELVTDAVARTEEALVPYTGGQRLYGQVEGDLLWTFDRATVDAPLQPYMWARLKRS.

The GXWXGXG signature appears at glycine 21–glycine 27.

It belongs to the nitrobindin family.

The chain is Ferric nitrobindin-like protein from Cutibacterium acnes (strain DSM 16379 / KPA171202) (Propionibacterium acnes).